The sequence spans 164 residues: Vasopressin-neurophysin 2-copeptin (164 aa).

Positions 1–19 are cleaved as a signal peptide; the sequence is MPDTMLPACFLGLLAFSSA. A disulfide bond links Cys20 and Cys25. Gly28 is modified (glycine amide). Disulfide bonds link Cys41–Cys85, Cys44–Cys58, Cys52–Cys75, Cys59–Cys65, Cys92–Cys104, Cys98–Cys116, and Cys105–Cys110. A glycan (N-linked (GlcNAc...) asparagine) is linked at Asn131.

This sequence belongs to the vasopressin/oxytocin family. As to quaternary structure, interacts with vasopressin receptors V1bR/AVPR1B (Ki=85 pM), V1aR/AVPR1A (Ki=0.6 nM) and V2R/AVPR2 (Ki=4.9 nM). Interacts with oxytocin receptor (OXTR) (Ki=110 nM). In terms of assembly, (Microbial infection) May interact with SARS coronavirus-2/SARS-CoV-2; they may form a complex with secreted ACE2.

The protein resides in the secreted. Its function is as follows. Specifically binds vasopressin. Functionally, has a direct antidiuretic action on the kidney, it also causes vasoconstriction of the peripheral vessels. Acts by binding to vasopressin receptors (V1bR/AVPR1B, V1aR/AVPR1A, and V2R/AVPR2). The protein is Vasopressin-neurophysin 2-copeptin (AVP) of Homo sapiens (Human).